The following is a 393-amino-acid chain: Probable acetyl-CoA acyltransferase (393 aa).

Cysteine 88 functions as the Acyl-thioester intermediate in the catalytic mechanism. Active-site proton acceptor residues include histidine 349 and cysteine 378.

Belongs to the thiolase-like superfamily. Thiolase family.

The protein resides in the cytoplasm. It carries out the reaction 2 acetyl-CoA = acetoacetyl-CoA + CoA. The sequence is that of Probable acetyl-CoA acyltransferase from Staphylococcus aureus (strain Mu50 / ATCC 700699).